Reading from the N-terminus, the 458-residue chain is UDP-N-acetylmuramoylalanine--D-glutamate ligase (458 aa).

Position 124–130 (124–130) interacts with ATP; that stretch reads GSDGKTT.

The protein belongs to the MurCDEF family.

It localises to the cytoplasm. It catalyses the reaction UDP-N-acetyl-alpha-D-muramoyl-L-alanine + D-glutamate + ATP = UDP-N-acetyl-alpha-D-muramoyl-L-alanyl-D-glutamate + ADP + phosphate + H(+). The protein operates within cell wall biogenesis; peptidoglycan biosynthesis. Cell wall formation. Catalyzes the addition of glutamate to the nucleotide precursor UDP-N-acetylmuramoyl-L-alanine (UMA). The polypeptide is UDP-N-acetylmuramoylalanine--D-glutamate ligase (Clostridium beijerinckii (strain ATCC 51743 / NCIMB 8052) (Clostridium acetobutylicum)).